We begin with the raw amino-acid sequence, 294 residues long: Metallophosphoesterase MPPED2 (294 aa).

Residues Asp65, His67, Asp86, Asn117, and His213 each coordinate Mn(2+). 117-118 (NH) provides a ligand contact to GMP. GMP-binding positions include 225 to 226 (KE) and 252 to 255 (GIHE). His254 is a Mn(2+) binding site.

Belongs to the UPF0046 family. As to quaternary structure, homodimer. Mn(2+) serves as cofactor. Co(2+) is required as a cofactor.

With respect to regulation, inhibited by nmolar levels of AMP and GMP. Displays low metallophosphoesterase activity (in vitro). May play a role in the development of the nervous system. The polypeptide is Metallophosphoesterase MPPED2 (Mpped2) (Mus musculus (Mouse)).